The sequence spans 803 residues: Zinc finger X-linked protein ZXDB (803 aa).

Disordered regions lie at residues Met-1–Asp-91, Glu-120–Thr-140, and Ala-218–Gly-260. The segment covering Leu-13–Gly-26 has biased composition (gly residues). C2H2-type zinc fingers lie at residues Tyr-271–His-295, Phe-304–His-328, Phe-334–His-358, Phe-364–His-386, Tyr-393–His-417, Phe-424–His-448, Phe-454–His-478, Phe-484–His-508, Phe-514–His-538, and Ser-547–His-572. Residues Tyr-271–Asp-577 form a required for interaction with ZXDC region. Residues Gln-576–Val-703 form a required for transcriptional activation region.

The protein belongs to the ZXD family. In terms of assembly, self-associates. Interacts with ZXDC and CIITA. May be expressed in brain, heart, kidney, liver, lung, muscle and placenta.

It localises to the nucleus. In terms of biological role, cooperates with CIITA to promote transcription of MHC class I and MHC class II genes. The polypeptide is Zinc finger X-linked protein ZXDB (ZXDB) (Homo sapiens (Human)).